Consider the following 940-residue polypeptide: Alanine--tRNA ligase (940 aa).

Positions 581, 585, 683, and 687 each coordinate Zn(2+).

This sequence belongs to the class-II aminoacyl-tRNA synthetase family. It depends on Zn(2+) as a cofactor.

The protein localises to the cytoplasm. It carries out the reaction tRNA(Ala) + L-alanine + ATP = L-alanyl-tRNA(Ala) + AMP + diphosphate. Functionally, catalyzes the attachment of alanine to tRNA(Ala) in a two-step reaction: alanine is first activated by ATP to form Ala-AMP and then transferred to the acceptor end of tRNA(Ala). Also edits incorrectly charged Ser-tRNA(Ala) and Gly-tRNA(Ala) via its editing domain. This Leptospira borgpetersenii serovar Hardjo-bovis (strain JB197) protein is Alanine--tRNA ligase.